The following is a 186-amino-acid chain: Tumor necrosis factor alpha-induced protein 8-like protein 1 (186 aa).

The protein belongs to the TNFAIP8 family.

It localises to the cytoplasm. This chain is Tumor necrosis factor alpha-induced protein 8-like protein 1 (TNFAIP8L1), found in Gallus gallus (Chicken).